The following is an 86-amino-acid chain: Large ribosomal subunit protein eL20 (86 aa).

This sequence belongs to the eukaryotic ribosomal protein eL20 family. As to quaternary structure, part of the 50S ribosomal subunit. Binds 23S rRNA.

The protein is Large ribosomal subunit protein eL20 of Sulfolobus acidocaldarius (strain ATCC 33909 / DSM 639 / JCM 8929 / NBRC 15157 / NCIMB 11770).